The chain runs to 72 residues: uncharacterized protein (72 aa).

It belongs to the asfivirus I73R family.

It localises to the virion. This is an uncharacterized protein from African swine fever virus (isolate Warthog/Namibia/Wart80/1980) (ASFV).